Reading from the N-terminus, the 437-residue chain is tRNA-2-methylthio-N(6)-dimethylallyladenosine synthase (437 aa).

Residues 2 to 117 (KHLYIKTFGC…LPQMIQRALD (116 aa)) form the MTTase N-terminal domain. 6 residues coordinate [4Fe-4S] cluster: Cys-11, Cys-48, Cys-80, Cys-154, Cys-158, and Cys-161. One can recognise a Radical SAM core domain in the interval 140 to 372 (RAQGVVGQVT…QQLLNTQQLQ (233 aa)). Residues 375–437 (KARVGRRESV…LPNSLRGRLV (63 aa)) form the TRAM domain.

It belongs to the methylthiotransferase family. MiaB subfamily. As to quaternary structure, monomer. The cofactor is [4Fe-4S] cluster.

The protein resides in the cytoplasm. It catalyses the reaction N(6)-dimethylallyladenosine(37) in tRNA + (sulfur carrier)-SH + AH2 + 2 S-adenosyl-L-methionine = 2-methylsulfanyl-N(6)-dimethylallyladenosine(37) in tRNA + (sulfur carrier)-H + 5'-deoxyadenosine + L-methionine + A + S-adenosyl-L-homocysteine + 2 H(+). In terms of biological role, catalyzes the methylthiolation of N6-(dimethylallyl)adenosine (i(6)A), leading to the formation of 2-methylthio-N6-(dimethylallyl)adenosine (ms(2)i(6)A) at position 37 in tRNAs that read codons beginning with uridine. The chain is tRNA-2-methylthio-N(6)-dimethylallyladenosine synthase from Magnetococcus marinus (strain ATCC BAA-1437 / JCM 17883 / MC-1).